A 156-amino-acid polypeptide reads, in one-letter code: Melatonin receptor type 1A (156 aa).

3 consecutive transmembrane segments (helical) span residues 19-39 (LCYV…NLQT), 62-82 (TIAL…FCYL), and 115-135 (FVVF…GLIV).

This sequence belongs to the G-protein coupled receptor 1 family. As to expression, at least in the brain, more precisely in the pars tuberalis and the suprachiasmatic nucleus.

It is found in the cell membrane. Its function is as follows. High affinity receptor for melatonin. Likely to mediate the reproductive and circadian actions of melatonin. The activity of this receptor is mediated by pertussis toxin sensitive G proteins that inhibit adenylate cyclase activity. Possibly involved in sleep induction, by melatonin activation of the potassium channel KCNMA1/BK and the dissociation of G-beta and G-gamma subunits, thereby decreasing synaptic transmission. In Rattus norvegicus (Rat), this protein is Melatonin receptor type 1A (Mtnr1a).